A 434-amino-acid polypeptide reads, in one-letter code: Trigger factor (434 aa).

Residues 163-248 (GDRVTIDFEG…LTKIEAQHLP (86 aa)) enclose the PPIase FKBP-type domain.

It belongs to the FKBP-type PPIase family. Tig subfamily.

It localises to the cytoplasm. The enzyme catalyses [protein]-peptidylproline (omega=180) = [protein]-peptidylproline (omega=0). Involved in protein export. Acts as a chaperone by maintaining the newly synthesized protein in an open conformation. Functions as a peptidyl-prolyl cis-trans isomerase. This is Trigger factor from Methylibium petroleiphilum (strain ATCC BAA-1232 / LMG 22953 / PM1).